The following is a 238-amino-acid chain: Ubiquitin-conjugating enzyme E2 R2 (238 aa).

The 167-residue stretch at 8 to 174 (SSQKALMLEL…IRKQVSATKA (167 aa)) folds into the UBC core domain. Cys-93 acts as the Glycyl thioester intermediate in catalysis. Residues 98 to 113 (HPPVDDPQSGELPSER) are important for ubiquitin transfer. The disordered stretch occupies residues 194–238 (TKVPSNDNSSDLLYDDLYDDDIDDEDEEEEDADCYDDDDSGNEES). Positions 206–238 (LYDDLYDDDIDDEDEEEEDADCYDDDDSGNEES) are enriched in acidic residues. A Phosphoserine; by CK2 modification is found at Ser-233.

It belongs to the ubiquitin-conjugating enzyme family. Interacts with multiple Cul1-RING E3 ubiquitin-protein ligase complexes, also known as SCF (SKP1-CUL1-F-box protein) complexes, including SCF(FBXW7) and SCF(BTRC). Interacts with multiple Cul2-RING (CRL2) E3 ubiquitin-protein ligase complexes, also known as ECS (Elongin BC-CUL2/5-SOCS-box protein) complexes, including CRL2(FEM1C) and ECS(VHL). When phosphorylated, interacts with beta-TrCP (BTRC).

It catalyses the reaction S-ubiquitinyl-[E1 ubiquitin-activating enzyme]-L-cysteine + [E2 ubiquitin-conjugating enzyme]-L-cysteine = [E1 ubiquitin-activating enzyme]-L-cysteine + S-ubiquitinyl-[E2 ubiquitin-conjugating enzyme]-L-cysteine.. It participates in protein modification; protein ubiquitination. Neddylation of CUL2 in the CRL2(FEM1C) E3 ligase complex increases substrate affinity of UBE2R2 and the ubiquitin-transfer rate in the E2-E3 complex. E2 ubiquitin-conjugating enzyme that accepts ubiquitin from an E1 ubiquitin-activating protein, and catalyzes its covalent attachment to other proteins by an E3 ubiquitin-protein ligase complex. In vitro catalyzes monoubiquitination and 'Lys-48'-linked polyubiquitination. Works in collaboration with various Cul1-RING and Cul2-RING E3 ligase complexes. May be involved in degradation of katenin. The chain is Ubiquitin-conjugating enzyme E2 R2 (UBE2R2) from Homo sapiens (Human).